The chain runs to 127 residues: Glycine cleavage system H protein (127 aa).

The Lipoyl-binding domain occupies 24–106 (TVTVGITDHA…FEGAWIAKIK (83 aa)). Residue Lys-65 is modified to N6-lipoyllysine.

Belongs to the GcvH family. The glycine cleavage system is composed of four proteins: P, T, L and H. Requires (R)-lipoate as cofactor.

Its function is as follows. The glycine cleavage system catalyzes the degradation of glycine. The H protein shuttles the methylamine group of glycine from the P protein to the T protein. This chain is Glycine cleavage system H protein, found in Marinomonas sp. (strain MWYL1).